The following is a 692-amino-acid chain: MMIARFGKQVLRKNVLVSNRIHFPVISRGFHNSFINKSDDLKSPPIDITKGQTEAKVETKKDKFAGFGLDLDELIGETAKGSQVTEQTELTKSEEEEKKKKNINTNTNKNDRKSVPAISLEDFNPSQFKDFKNTGLIDDVILRALDRAHFKDLTPIQQKSIVPLLETERGMVCRAKTGTGKTLTFLIPTLQSAVSRKIASGGRSSGVDTVIIVPTRDLALQIYDEYQKVLRGISGSRKPHISYVIGGMKNSFNPRNPSEIVIATPGRLEADLRSPLFASAFTDIKYRVYDEADRLLDVGFEPTLDSIDRSIKMIRSDDAEPLKSLLFSATVDARLDQFAKQHINKKYDYINTVPEDDPEVHENIHQVMYKCKDAIDKFGSFFNYVNQLVKDSPDMKMMVFLPTQTAVEFLYSYMSEACHKHDVDIDIFHLHGKRSASQRQRALSNFKRDDSGILITTDVAARGIDVKGVTHVVQLFPSSEIADYVHKVGRTGRAGKEGKAVLFITQPEMAYVRRLNSERGVTFEQVHESSEIDNSIDFFEGMRPDEQVANDFFYTLMSFLAQISSTYRLRADDLVAENVSLYRAILQKPDAKLSLRAASALIKRLNRDVVREFFEQGRGGNNGGYGGYGGYGGSSYGRSGGSNRYSGGGGNRSEKRFSFAGRGGNSGGHSGRGRGGRSGYSGGRSSQYSDWE.

Residues 1 to 37 (MMIARFGKQVLRKNVLVSNRIHFPVISRGFHNSFINK) constitute a mitochondrion transit peptide. Positions 82 to 113 (SQVTEQTELTKSEEEEKKKKNINTNTNKNDRK) are disordered. Over residues 89-99 (ELTKSEEEEKK) the composition is skewed to basic and acidic residues. Positions 130-158 (DFKNTGLIDDVILRALDRAHFKDLTPIQQ) match the Q motif motif. One can recognise a Helicase ATP-binding domain in the interval 162–349 (VPLLETERGM…KQHINKKYDY (188 aa)). 175–182 (AKTGTGKT) contacts ATP. Residues 290-293 (DEAD) carry the DEAD box motif. A Helicase C-terminal domain is found at 384–534 (YVNQLVKDSP…QVHESSEIDN (151 aa)). Residues 643-692 (NRYSGGGGNRSEKRFSFAGRGGNSGGHSGRGRGGRSGYSGGRSSQYSDWE) are disordered. Positions 661–670 (GRGGNSGGHS) are enriched in gly residues.

It belongs to the DEAD box helicase family. DDX18/HAS1 subfamily.

It is found in the mitochondrion matrix. The catalysed reaction is ATP + H2O = ADP + phosphate + H(+). Functionally, ATP-dependent RNA helicase required for mitochondrial splicing of group I and II introns. Also required for efficient mitochondrial translation. The polypeptide is ATP-dependent RNA helicase MSS116, mitochondrial (MSS116) (Lodderomyces elongisporus (strain ATCC 11503 / CBS 2605 / JCM 1781 / NBRC 1676 / NRRL YB-4239) (Yeast)).